The sequence spans 556 residues: Urocanate hydratase (556 aa).

NAD(+)-binding positions include G52–G53, Q130, G176–G178, E196, R201, N242–A243, Q263–H267, Y273–L274, and Y322. C410 is an active-site residue. Position 492 (G492) interacts with NAD(+).

This sequence belongs to the urocanase family. Requires NAD(+) as cofactor.

Its subcellular location is the cytoplasm. The catalysed reaction is 4-imidazolone-5-propanoate = trans-urocanate + H2O. The protein operates within amino-acid degradation; L-histidine degradation into L-glutamate; N-formimidoyl-L-glutamate from L-histidine: step 2/3. In terms of biological role, catalyzes the conversion of urocanate to 4-imidazolone-5-propionate. In Shewanella oneidensis (strain ATCC 700550 / JCM 31522 / CIP 106686 / LMG 19005 / NCIMB 14063 / MR-1), this protein is Urocanate hydratase.